We begin with the raw amino-acid sequence, 975 residues long: Exocyst complex component 4 (975 aa).

A2 carries the post-translational modification N-acetylalanine. K9 carries the post-translational modification N6-acetyllysine. Position 32 is a phosphoserine (S32). The stretch at 32–114 (STSDDVEDRE…HCKRDELRKL (83 aa)) forms a coiled coil. Residues 211–224 (RNKEKGKMSSHGKD) show a composition bias toward basic and acidic residues. The tract at residues 211–230 (RNKEKGKMSSHGKDPSPGPL) is disordered. The residue at position 226 (S226) is a Phosphoserine. T238 bears the Phosphothreonine mark. Residue S469 is modified to Phosphoserine.

The protein belongs to the SEC8 family. The exocyst complex is composed of EXOC1, EXOC2, EXOC3, EXOC4, EXOC5, EXOC6, EXOC7 and EXOC8. Interacts with BIRC6/bruce. Interacts with MYRIP. Interacts with SH3BP1; required for the localization of both SH3BP1 and the exocyst to the leading edge of migrating cells. Interacts with SLC6A9. In terms of tissue distribution, expressed in the striatum (at protein level).

It localises to the midbody. Its subcellular location is the midbody ring. The protein resides in the cell projection. It is found in the cytoplasm. The protein localises to the cytoskeleton. It localises to the microtubule organizing center. Its subcellular location is the centrosome. Functionally, component of the exocyst complex involved in the docking of exocytic vesicles with fusion sites on the plasma membrane. The polypeptide is Exocyst complex component 4 (Exoc4) (Mus musculus (Mouse)).